The chain runs to 282 residues: Pantothenate synthetase (282 aa).

29–36 (MGFLHEGH) serves as a coordination point for ATP. Residue His-36 is the Proton donor of the active site. Gln-60 is a (R)-pantoate binding site. Gln-60 is a binding site for beta-alanine. 146-149 (GEKD) is a binding site for ATP. Position 152 (Gln-152) interacts with (R)-pantoate. Residues Ile-175 and 183 to 186 (KSSR) contribute to the ATP site.

Belongs to the pantothenate synthetase family. Homodimer.

It is found in the cytoplasm. It carries out the reaction (R)-pantoate + beta-alanine + ATP = (R)-pantothenate + AMP + diphosphate + H(+). It functions in the pathway cofactor biosynthesis; (R)-pantothenate biosynthesis; (R)-pantothenate from (R)-pantoate and beta-alanine: step 1/1. Catalyzes the condensation of pantoate with beta-alanine in an ATP-dependent reaction via a pantoyl-adenylate intermediate. This chain is Pantothenate synthetase, found in Clostridioides difficile (strain 630) (Peptoclostridium difficile).